A 151-amino-acid polypeptide reads, in one-letter code: Protein A151R (151 aa).

4 residues coordinate Zn(2+): His102, Cys109, Cys132, and Cys135. A Thioredoxin WCTKC motif motif is present at residues 131–135; the sequence is WCTKC.

The protein belongs to the asfivirus A151R family. As to quaternary structure, monomer. Homodimer. Interacts with protein B119L. Interacts with membrane protein E248R. Requires Zn(2+) as cofactor.

Its function is as follows. May participate in a redox cascade for the formation of disulfide bonds in viral proteins. This is Protein A151R from African swine fever virus (strain Badajoz 1971 Vero-adapted) (Ba71V).